The following is a 444-amino-acid chain: ATPase PAAT (444 aa).

Ser177, Ser182, and Ser254 each carry phosphoserine. The interval 279–300 (SAQPSGEGNTTNHDEGHLMPQN) is disordered. Residues 280 to 289 (AQPSGEGNTT) are compositionally biased toward polar residues. The residue at position 302 (Ser302) is a Phosphoserine. The segment at 424–444 (PPPGMPLRHYDSRERLSNGER) is disordered. Residues 431–444 (RHYDSRERLSNGER) are compositionally biased toward basic and acidic residues.

As to quaternary structure, homodimer. Interacts with ABCB7, ABCB8/MITOSUR and ABCB10.

Its subcellular location is the cytoplasm. The protein localises to the mitochondrion. It carries out the reaction ATP + H2O = ADP + phosphate + H(+). Functionally, ATPase that regulates mitochondrial ABC transporters ABCB7, ABCB8/MITOSUR and ABCB10. Regulates mitochondrial ferric concentration and heme biosynthesis and plays a role in the maintenance of mitochondrial homeostasis and cell survival. The polypeptide is ATPase PAAT (Mus musculus (Mouse)).